Reading from the N-terminus, the 582-residue chain is ATP-dependent lipid A-core flippase (582 aa).

The next 5 membrane-spanning stretches (helical) occupy residues 25–45 (WFMLVISVIGYALYAGAQAGA), 64–84 (VLIVSIAPLVLVLFQGLGQFM), 142–162 (AIIVIIREGLTVIGLFSFLLW), 165–185 (WKLTLILVTVVPLIALVMNIT), and 253–273 (VIVQLFVAVGIGFITYLYIHL). The ABC transmembrane type-1 domain maps to 29–309 (VISVIGYALY…LTDVNVKVQR (281 aa)). The region spanning 342–577 (IDFEGVSFGY…NGLYTQMYRM (236 aa)) is the ABC transporter domain. Position 375–382 (375–382 (GRSGAGKS)) interacts with ATP.

This sequence belongs to the ABC transporter superfamily. Lipid exporter (TC 3.A.1.106) family. Homodimer.

It is found in the cell inner membrane. The catalysed reaction is ATP + H2O + lipid A-core oligosaccharideSide 1 = ADP + phosphate + lipid A-core oligosaccharideSide 2.. Involved in lipopolysaccharide (LPS) biosynthesis. Translocates lipid A-core from the inner to the outer leaflet of the inner membrane. Transmembrane domains (TMD) form a pore in the inner membrane and the ATP-binding domain (NBD) is responsible for energy generation. In Alcanivorax borkumensis (strain ATCC 700651 / DSM 11573 / NCIMB 13689 / SK2), this protein is ATP-dependent lipid A-core flippase.